A 227-amino-acid chain; its full sequence is Probable cytokinin riboside 5'-monophosphate phosphoribohydrolase LOGL9 (227 aa).

The span at methionine 1–aspartate 15 shows a compositional bias: polar residues. Residues methionine 1–arginine 26 form a disordered region. Residues glutamate 117, arginine 135–lysine 136, and glycine 152–glutamate 158 contribute to the substrate site.

It belongs to the LOG family. In terms of tissue distribution, expressed in roots, leaves and stems.

It carries out the reaction N(6)-(dimethylallyl)adenosine 5'-phosphate + H2O = N(6)-dimethylallyladenine + D-ribose 5-phosphate. It catalyses the reaction 9-ribosyl-trans-zeatin 5'-phosphate + H2O = trans-zeatin + D-ribose 5-phosphate. Cytokinin-activating enzyme working in the direct activation pathway. Phosphoribohydrolase that converts inactive cytokinin nucleotides to the biologically active free-base forms. The protein is Probable cytokinin riboside 5'-monophosphate phosphoribohydrolase LOGL9 (LOGL9) of Oryza sativa subsp. japonica (Rice).